The chain runs to 359 residues: MISKLSVNPTFSPSYNIIVDSVLDFSHILEYVTNKQVLVVTNTTVAKLYLTKFLAALVDDLDVRTCILEDGEQYKSQQSLDKILSTLLENHFTRNSTVLVALGGGVIGDITGFAAAIYQRGIDFIQIPTTLLSQVDSSVGGKTAINHQLGKNMIGAFYQPKVVYTSIEFYKTLPQREYIAGMAEVVKYAFISKDFYLWLDSNRDKILAKDSVTLIEMVKRSCQIKAQVVAMDEKELTGARAILNFGHTFGHAIEKCQNYRGLKHGEAVGVGMAQAIDFSHYLGLISQQQAKDFNDFIVSFGISIDFPNDICQKEFLEAMLLDKKNSNKELKFILIENIGSLSLQKQSKNELEQFLDISR.

Residues 70–75 (DGEQYK), 105–109 (GVIGD), 129–130 (TT), K142, K151, and 169–172 (FYKT) contribute to the NAD(+) site. Zn(2+) is bound by residues E184, H247, and H264.

This sequence belongs to the sugar phosphate cyclases superfamily. Dehydroquinate synthase family. Requires Co(2+) as cofactor. Zn(2+) is required as a cofactor. NAD(+) serves as cofactor.

It is found in the cytoplasm. It carries out the reaction 7-phospho-2-dehydro-3-deoxy-D-arabino-heptonate = 3-dehydroquinate + phosphate. Its pathway is metabolic intermediate biosynthesis; chorismate biosynthesis; chorismate from D-erythrose 4-phosphate and phosphoenolpyruvate: step 2/7. Its function is as follows. Catalyzes the conversion of 3-deoxy-D-arabino-heptulosonate 7-phosphate (DAHP) to dehydroquinate (DHQ). In Francisella tularensis subsp. tularensis (strain FSC 198), this protein is 3-dehydroquinate synthase.